The chain runs to 250 residues: MMKILLSNDDGVHAPGILALYQALKEVADVRVIAPDRNCSGASNSLTLHNPLRVRRLDNGFYSVNGTPTDCVHLGTNSPMAEDVDLVVSGINDSPNMGDDVLYSGTVAAAMEGRFMGLPAIAVSMGGRGHDYYDTAGRVVAEIVANMENDPLRLDTVLNINVPYTTYDKLKGTRVTKLGRRHRAETMVHDRDPFGSEIFWYGPIGHHASDEPNTDFTAIHEGYISITPLSLDMTAQRHTDTLTDWLEQQK.

Positions 9, 10, 40, and 92 each coordinate a divalent metal cation.

This sequence belongs to the SurE nucleotidase family. The cofactor is a divalent metal cation.

Its subcellular location is the cytoplasm. It catalyses the reaction a ribonucleoside 5'-phosphate + H2O = a ribonucleoside + phosphate. In terms of biological role, nucleotidase that shows phosphatase activity on nucleoside 5'-monophosphates. This chain is 5'-nucleotidase SurE, found in Idiomarina loihiensis (strain ATCC BAA-735 / DSM 15497 / L2-TR).